The sequence spans 716 residues: Ciliary WD repeat-containing protein ctxp80 (716 aa).

Residues 1-53 (MGCGGSSGASDPSSEKINWNNAEIHDEFKQEQKKAGAKRKAFDKTTGKAVEKE) form a disordered region. A compositionally biased stretch (polar residues) spans 8–21 (GASDPSSEKINWNN). Positions 23 to 53 (EIHDEFKQEQKKAGAKRKAFDKTTGKAVEKE) are enriched in basic and acidic residues. WD repeat units lie at residues 167–208 (YHTN…KKGR), 213–254 (KGGR…QVKK), 257–297 (SGPD…FKKK), 305–343 (GKPT…STYD), 345–382 (HGKG…AEKT), 424–462 (HSDG…STAL), 529–568 (DSGE…KLGT), 571–610 (AHNS…QDPS), 639–678 (TDGT…GATP), and 683–715 (GHSE…QWKK).

The protein belongs to the WD repeat EMAP family.

This is Ciliary WD repeat-containing protein ctxp80 from Euplotoides octocarinatus (Freshwater ciliate).